Reading from the N-terminus, the 94-residue chain is Acylphosphatase (94 aa).

In terms of domain architecture, Acylphosphatase-like spans 8 to 94; the sequence is HIRAWVSGKV…ETPPLGFEVC (87 aa). Residues arginine 23 and asparagine 41 contribute to the active site.

The protein belongs to the acylphosphatase family.

It catalyses the reaction an acyl phosphate + H2O = a carboxylate + phosphate + H(+). The chain is Acylphosphatase (acyP) from Hahella chejuensis (strain KCTC 2396).